Reading from the N-terminus, the 180-residue chain is ATP-dependent protease subunit HslV (180 aa).

The active site involves T2. Residues G158, C161, and T164 each contribute to the Na(+) site.

This sequence belongs to the peptidase T1B family. HslV subfamily. As to quaternary structure, a double ring-shaped homohexamer of HslV is capped on each side by a ring-shaped HslU homohexamer. The assembly of the HslU/HslV complex is dependent on binding of ATP.

The protein resides in the cytoplasm. The catalysed reaction is ATP-dependent cleavage of peptide bonds with broad specificity.. Allosterically activated by HslU binding. Its function is as follows. Protease subunit of a proteasome-like degradation complex believed to be a general protein degrading machinery. The chain is ATP-dependent protease subunit HslV from Baumannia cicadellinicola subsp. Homalodisca coagulata.